The sequence spans 541 residues: Centrosomal protein of 63 kDa (541 aa).

The residue at position 1 (Met1) is an N-acetylmethionine. Coiled-coil stretches lie at residues 22-199 (EAEL…ESVE) and 242-305 (MTVL…TQHA). Ser278 bears the Phosphoserine mark. Residues 294–324 (QEKVKATDTQHAVEAIRPREESPAEKKYTSQ) are disordered. A compositionally biased stretch (basic and acidic residues) spans 307–321 (EAIRPREESPAEKKY). 2 coiled-coil regions span residues 346-485 (LQAE…KLEL) and 514-541 (HILE…TALK).

The protein belongs to the CEP63 family. As to quaternary structure, interacts with CEP152 and CDK1; these interactions recruit both ligands to centrosomes. Interacts with CDK2, CDK5RAP2, WDR62, CEP90, KIAA0753/moonraker and CCDC14. CEP63, CDK5RAP2, CEP152, WDR62 are proposed to form a stepwise assembled complex at the centrosome forming a ring near parental centrioles. Interacts with CCDC57; the interaction is required for their location to proximal end of centrioles. Interacts with FXR1; promoting its stabilization. Polyubiquitinated via 'Lys-48'-linked ubiquitin, leading to its degradation. Deubiquitinated by USP36, promoting its stabilization.

Its subcellular location is the cytoplasm. It is found in the cytoskeleton. The protein resides in the microtubule organizing center. The protein localises to the centrosome. It localises to the centriole. Its subcellular location is the centriolar satellite. Functionally, required for normal spindle assembly. Plays a key role in mother-centriole-dependent centriole duplication; the function seems also to involve CEP152, CDK5RAP2 and WDR62 through a stepwise assembled complex at the centrosome that recruits CDK2 required for centriole duplication. Reported to be required for centrosomal recruitment of CEP152; however, this function has been questioned. Also recruits CDK1 to centrosomes. Plays a role in DNA damage response. Following DNA damage, such as double-strand breaks (DSBs), is removed from centrosomes; this leads to the inactivation of spindle assembly and delay in mitotic progression. Promotes stabilization of FXR1 protein by inhibiting FXR1 ubiquitination. The chain is Centrosomal protein of 63 kDa (CEP63) from Pongo abelii (Sumatran orangutan).